Here is a 159-residue protein sequence, read N- to C-terminus: Large ribosomal subunit protein uL11 (159 aa).

Belongs to the universal ribosomal protein uL11 family. Part of the ribosomal stalk of the 50S ribosomal subunit. Interacts with L10 and the large rRNA to form the base of the stalk. L10 forms an elongated spine to which L12 dimers bind in a sequential fashion forming a multimeric L10(L12)X complex.

In terms of biological role, forms part of the ribosomal stalk which helps the ribosome interact with GTP-bound translation factors. The sequence is that of Large ribosomal subunit protein uL11 from Methanococcus vannielii (strain ATCC 35089 / DSM 1224 / JCM 13029 / OCM 148 / SB).